The sequence spans 332 residues: L-lactate dehydrogenase A chain (332 aa).

Lys5 carries the N6-acetyllysine; alternate modification. At Lys5 the chain carries N6-succinyllysine; alternate. N6-acetyllysine is present on Lys14. Thr18 carries the phosphothreonine modification. 29–57 provides a ligand contact to NAD(+); sequence GAVGMACAISILMKDLADELALVDVIEDK. Lys57 is modified (N6-acetyllysine; alternate). A Glycyl lysine isopeptide (Lys-Gly) (interchain with G-Cter in SUMO2); alternate cross-link involves residue Lys57. Lys81 is modified (N6-acetyllysine). Arg99 is a binding site for NAD(+). Arg106 contacts substrate. Lys118 carries the N6-acetyllysine; alternate modification. Lys118 is modified (N6-succinyllysine; alternate). N6-acetyllysine is present on Lys126. Asn138 contributes to the NAD(+) binding site. Positions 138 and 169 each coordinate substrate. The active-site Proton acceptor is the His193. Lys232 carries the N6-acetyllysine modification. Tyr239 is subject to Phosphotyrosine. Lys243 bears the N6-acetyllysine mark. A substrate-binding site is contributed by Thr248. Phosphothreonine occurs at positions 309 and 322.

This sequence belongs to the LDH/MDH superfamily. LDH family. Homotetramer. Interacts with PTEN upstream reading frame protein MP31. ISGylated.

The protein localises to the cytoplasm. It catalyses the reaction (S)-lactate + NAD(+) = pyruvate + NADH + H(+). Its pathway is fermentation; pyruvate fermentation to lactate; (S)-lactate from pyruvate: step 1/1. In terms of biological role, interconverts simultaneously and stereospecifically pyruvate and lactate with concomitant interconversion of NADH and NAD(+). The protein is L-lactate dehydrogenase A chain (LDHA) of Monodelphis domestica (Gray short-tailed opossum).